Consider the following 281-residue polypeptide: Complement C1q tumor necrosis factor-related protein 1 (281 aa).

A signal peptide spans 1 to 25 (MGSCAQGFMLGCCLLLAITWGPILS). The disordered stretch occupies residues 35-68 (QEWEETEELPSPLDPVTRPEETREKYSPRQGEDL). The segment covering 51-66 (TRPEETREKYSPRQGE) has biased composition (basic and acidic residues). Asn-93 carries an N-linked (GlcNAc...) asparagine glycan. The 42-residue stretch at 99-140 (GEKGDRGDRGLQGKYGKIGSTGPRGHVGPKGQKGSIGAPGNH) folds into the Collagen-like domain. The tract at residues 107-136 (RGLQGKYGKIGSTGPRGHVGPKGQKGSIGA) is disordered. Residues 141–281 (CKSQYAAFSV…GYLVKPASEP (141 aa)) form the C1q domain.

The protein localises to the secreted. This chain is Complement C1q tumor necrosis factor-related protein 1 (C1qtnf1), found in Mus musculus (Mouse).